The following is a 412-amino-acid chain: Palmitoyltransferase ZDHHC11 (412 aa).

The Cytoplasmic segment spans residues 1–42 (MDTRSGSQCSVTPEAILNNEKLVLPPRISRVNGWSLPLHYFQ). The chain crosses the membrane as a helical span at residues 43-63 (VVTWAVFVGLSSATFGIFIPF). Residues 64-69 (LPHAWK) lie on the Lumenal side of the membrane. A helical membrane pass occupies residues 70–90 (YIAYVVTGGIFSFHLVVHLIA). The Cytoplasmic portion of the chain corresponds to 91–176 (SCIDPADSNV…YWFFFSTVAS (86 aa)). A DHHC domain is found at 125 to 175 (QFCHLCKVTVNKKTKHCISCNKCVSGFDHHCKWINNCVGSRNYWFFFSTVA). Residue C155 is the S-palmitoyl cysteine intermediate of the active site. The helical transmembrane segment at 177–197 (ATAGMLCLIAILLYVLVQYLV) threads the bilayer. Over 198–230 (NPGVLRTDPRYEDVKNMNTWLLFLPLFPVQVQT) the chain is Lumenal. A mediates interaction with IRF3 and STING1 region spans residues 198-412 (NPGVLRTDPR…MKTDSAESED (215 aa)). The helical transmembrane segment at 231-251 (LIVVIIGMLVLLLDFLGLVHL) threads the bilayer. Topologically, residues 252 to 412 (GQLLIFHIYL…MKTDSAESED (161 aa)) are cytoplasmic. The segment at 374-412 (HPDGGSMAQEADDAPSISTLGLQQETTEPMKTDSAESED) is disordered. Over residues 389–400 (SISTLGLQQETT) the composition is skewed to polar residues. Positions 401 to 412 (EPMKTDSAESED) are enriched in basic and acidic residues.

The protein belongs to the DHHC palmitoyltransferase family. As to quaternary structure, interacts with IRF3 and STING1; in presence of DNA viruses recruits IRF3 to STING1 promoting IRF3 phosphorylation and activation. In terms of tissue distribution, expressed in testis.

It localises to the endoplasmic reticulum membrane. It catalyses the reaction L-cysteinyl-[protein] + hexadecanoyl-CoA = S-hexadecanoyl-L-cysteinyl-[protein] + CoA. Endoplasmic reticulum-localized palmitoyltransferase that could catalyze the addition of palmitate onto various protein substrates and be involved in a variety of cellular processes. Has a palmitoyltransferase activity toward NCDN and regulates NCDN association with endosome membranes through this palmitoylation. May play a role in cell proliferation. In terms of biological role, also has a palmitoyltransferase activity-independent function in DNA virus-triggered and CGAS-mediated innate immune response. Functions as an adapter that recruits IRF3 to STING1 to promote the activation of that key transcriptional regulator of type I interferon (IFN)-dependent immune response. This is Palmitoyltransferase ZDHHC11 from Homo sapiens (Human).